We begin with the raw amino-acid sequence, 410 residues long: Argininosuccinate synthase (410 aa).

9 to 17 (AYSGGLDTS) lines the ATP pocket. Y86 serves as a coordination point for L-citrulline. Residue G116 participates in ATP binding. L-aspartate contacts are provided by T118, N122, and D123. N122 contacts L-citrulline. Residues R126, S174, E259, and Y271 each contribute to the L-citrulline site.

It belongs to the argininosuccinate synthase family. Type 1 subfamily. As to quaternary structure, homotetramer.

The protein resides in the cytoplasm. It carries out the reaction L-citrulline + L-aspartate + ATP = 2-(N(omega)-L-arginino)succinate + AMP + diphosphate + H(+). The protein operates within amino-acid biosynthesis; L-arginine biosynthesis; L-arginine from L-ornithine and carbamoyl phosphate: step 2/3. This Limosilactobacillus reuteri (strain DSM 20016) (Lactobacillus reuteri) protein is Argininosuccinate synthase.